Reading from the N-terminus, the 557-residue chain is High-affinity hexose transporter ght4 (557 aa).

Residues 1-9 lie on the Cytoplasmic side of the membrane; it reads MGRTLTSVL. Residues 10 to 30 traverse the membrane as a helical segment; it reads VVFISMAGWLGGADTGSISGI. At 31-58 the chain is on the extracellular side; sequence LGMRDFQSRFADRYNPITNSYSYSAWRQ. Residues 59-79 traverse the membrane as a helical segment; that stretch reads ALLTGTVNAGCLFGAMLSSPF. The Cytoplasmic portion of the chain corresponds to 80–87; sequence TEAIGKKY. Residues 88 to 108 traverse the membrane as a helical segment; sequence SIAFFSGCYIIGQILLVTAVP. The Extracellular portion of the chain corresponds to 109–112; that stretch reads SWVQ. Residues 113–133 traverse the membrane as a helical segment; the sequence is IMVGKLFTGLTIGALSVLSPG. Residues 134-144 are Cytoplasmic-facing; sequence YQSEVAPPQIR. The chain crosses the membrane as a helical span at residues 145–165; sequence GAVVSTYQLFQTCGTLIAACI. Residues 166–179 lie on the Extracellular side of the membrane; the sequence is NMGTHKLRKTASWR. A helical membrane pass occupies residues 180-200; sequence TSFGINILWGIFLMVGVLFLP. At 201-266 the chain is on the cytoplasmic side; sequence ESPRYLIYKG…VFGKEVRYRT (66 aa). Residues 267-285 traverse the membrane as a helical segment; sequence VLGFLTMLLRELIGNNYYF. Over 286-301 the chain is Extracellular; it reads YYATQVFKGTGMTDIF. Residues 302 to 322 traverse the membrane as a helical segment; sequence LPAVILGAINFGTTFGALYTI. The Cytoplasmic portion of the chain corresponds to 323-328; it reads DNLGRR. The helical transmembrane segment at 329-349 threads the bilayer; the sequence is NPLIFGAAFQSICFFIYAAVG. At 350–363 the chain is on the extracellular side; that stretch reads DRKLIYKNGTSDHR. A glycan (N-linked (GlcNAc...) asparagine) is linked at asparagine 357. A helical membrane pass occupies residues 364 to 384; sequence AGAVMIVFSCLFLFSYCCSWG. At 385-404 the chain is on the cytoplasmic side; it reads PMGWVIVGETFPIRYRSKCA. The helical transmembrane segment at 405-425 threads the bilayer; it reads AVATSGNWLGNFMVSFFTPFI. At 426–432 the chain is on the extracellular side; sequence SNSIGFK. Residues 433–453 form a helical membrane-spanning segment; that stretch reads LGYIYACINMTSAFQIFLMAK. Over 454–557 the chain is Cytoplasmic; that stretch reads ETKGLTLEEV…VSEESHPTWV (104 aa). Positions 492–514 are enriched in basic and acidic residues; the sequence is KEEEKREREKSKGYRGQEERFIE. Positions 492-557 are disordered; that stretch reads KEEEKREREK…VSEESHPTWV (66 aa). The span at 524 to 536 shows a compositional bias: low complexity; it reads SSASSESFASAGA. The span at 547-557 shows a compositional bias: basic and acidic residues; the sequence is NVSEESHPTWV.

Belongs to the major facilitator superfamily. Sugar transporter (TC 2.A.1.1) family.

The protein resides in the membrane. The chain is High-affinity hexose transporter ght4 (ght4) from Schizosaccharomyces pombe (strain 972 / ATCC 24843) (Fission yeast).